The following is a 388-amino-acid chain: MNLHEYQAKALLKEYGMPVQEGILATNADEAVAAFEQLGGKFAVMKAQVHAGGRGKAGGVKVAKSKEDVIEFANNIIRTRLVTYQTDANGQPVNSIIVAEDVYPVERELYLGAVVDRSSRRITFMASTEGGVEIEKVAEETPEKIIKVEVDPLVGLQPFQAREVAFALGLKDKQIGQFVKIMTAAYQAFVENDFALFEINPLSVRENGEILCVDAKVGIDSNALYRLPKVAALRDKSQENERELKASEFDLNYVALEGNIGCMVNGAGLAMATMDIIKLYGGQPANFLDVGGGATKERVIEAFKIILADTSVQGVLINIFGGIVRCDMIAEAIIAAVQEVNVTVPVVVRLEGNNAELGAKLLDESGLKLISANGLSDAAEKVVAAVKA.

Residues 9–245 (KALLKEYGMP…KSQENERELK (237 aa)) form the ATP-grasp domain. ATP is bound by residues Lys-46, 53–55 (GRG), Glu-100, Tyr-103, and Glu-108. Residues Asn-200 and Asp-214 each coordinate Mg(2+). Substrate-binding positions include Asn-265 and 322–324 (GIV).

The protein belongs to the succinate/malate CoA ligase beta subunit family. As to quaternary structure, heterotetramer of two alpha and two beta subunits. It depends on Mg(2+) as a cofactor.

It catalyses the reaction succinate + ATP + CoA = succinyl-CoA + ADP + phosphate. The enzyme catalyses GTP + succinate + CoA = succinyl-CoA + GDP + phosphate. It functions in the pathway carbohydrate metabolism; tricarboxylic acid cycle; succinate from succinyl-CoA (ligase route): step 1/1. Succinyl-CoA synthetase functions in the citric acid cycle (TCA), coupling the hydrolysis of succinyl-CoA to the synthesis of either ATP or GTP and thus represents the only step of substrate-level phosphorylation in the TCA. The beta subunit provides nucleotide specificity of the enzyme and binds the substrate succinate, while the binding sites for coenzyme A and phosphate are found in the alpha subunit. In Acinetobacter baumannii (strain SDF), this protein is Succinate--CoA ligase [ADP-forming] subunit beta.